Consider the following 112-residue polypeptide: UPF0482 protein SG1468 (112 aa).

Residues 1-22 form the signal peptide; sequence MNTIPTRCLLGGLLALSLLAYA.

It belongs to the UPF0482 family.

The chain is UPF0482 protein SG1468 from Sodalis glossinidius (strain morsitans).